Reading from the N-terminus, the 502-residue chain is 4,4'-diapophytoene desaturase (4,4'-diaponeurosporene-forming) (502 aa).

Residue 5 to 17 (VIGAGVTGLAAAA) coordinates FAD.

This sequence belongs to the carotenoid/retinoid oxidoreductase family. CrtN subfamily.

It carries out the reaction 15-cis-4,4'-diapophytoene + 3 FAD + 3 H(+) = all-trans-4,4'-diaponeurosporene + 3 FADH2. The protein operates within carotenoid biosynthesis; staphyloxanthin biosynthesis; staphyloxanthin from farnesyl diphosphate: step 2/5. Involved in the biosynthesis of the yellow-orange carotenoid staphyloxanthin, which plays a role in the virulence via its protective function against oxidative stress. Catalyzes three successive dehydrogenation reactions that lead to the introduction of three double bonds into 4,4'-diapophytoene (dehydrosqualene), with 4,4'-diapophytofluene and 4,4'-diapo-zeta-carotene as intermediates, and 4,4'-diaponeurosporene (the major deep-yellow pigment in staphylococci strains) as the end product. The chain is 4,4'-diapophytoene desaturase (4,4'-diaponeurosporene-forming) from Staphylococcus aureus (strain MRSA252).